The primary structure comprises 519 residues: Cyclic AMP-responsive element-binding protein 3-like protein 1 (519 aa).

Positions 1-60 (MDAVLEPFPADRLFPGSSFLDLGDLNESDFLNNAHFPEHLDHFVENMEDFSNDLFSSFFD) are required for transcription activation. Over 1-376 (MDAVLEPFPA…MAATQTGTCL (376 aa)) the chain is Cytoplasmic. K184 participates in a covalent cross-link: Glycyl lysine isopeptide (Lys-Gly) (interchain with G-Cter in SUMO2). Positions 200–259 (DLVQMPPTPPSSHGSDSDGSQSPRSLPPSSPVRPMARSSTAISTSPLLTAPHKLQGTSGP) are disordered. The span at 210–223 (SSHGSDSDGSQSPR) shows a compositional bias: low complexity. Polar residues predominate over residues 236 to 246 (RSSTAISTSPL). The region spanning 290 to 353 (ALKRVRRKIK…RTLLQQLQKL (64 aa)) is the bZIP domain. A basic motif region spans residues 292–321 (KRVRRKIKNKISAQESRRKKKEYVECLEKK). Positions 332-353 (LWKKVETLETANRTLLQQLQKL) are leucine-zipper. Residues 377 to 397 (MVAALCFVLVLGSLVPCLPAF) form a helical; Signal-anchor for type II membrane protein membrane-spanning segment. An S2P recognition motif is present at residues 392–395 (PCLP). At 398–519 (SSGSMTVKED…LGPNTTIKLS (122 aa)) the chain is on the lumenal side. Residues 423 to 426 (RSLL) carry the S1P recognition motif. The tract at residues 449-519 (EGWELKPGGP…LGPNTTIKLS (71 aa)) is disordered. Positions 462-486 (RPQDHLRHDRADSIHETTKYLRETW) are enriched in basic and acidic residues. 3 N-linked (GlcNAc...) asparagine glycosylation sites follow: N493, N498, and N513.

It belongs to the bZIP family. ATF subfamily. As to quaternary structure, interacts with SMAD4, the interaction takes place upon TGFB1 induction and SMAD4 acts as a CREB3L1 coactivator to induce the expression of genes involved in assembly of collagen extracellular matrix. Post-translationally, N-glycosylated. Ubiquitinated by HRD1/SYVN1; undergoes 'Lys-48'-linked ubiquitination, followed by rapid proteasomal degradation under normal conditions. Upon ER stress, SYVN1 E3 ubiquitin-protein ligase dissociates from its substrate, ubiquitination does not occur and CREB3L1 is stabilized. In terms of processing, upon ER stress or DNA damage, translocated to the Golgi apparatus, where it is processed by regulated intramembrane proteolysis (RIP) to release the cytosol-facing N-terminal transcription factor domain. The cleavage is performed sequentially by site-1 and site-2 proteases (S1P/MBTPS1 and S2P/MBTPS2). RIP is induced by TGFB1 and ceramide. Expressed in cortical and trabecular bones. Highly expressed in osteoblasts, but not detected in osteoclasts, nor in macrophages. Expressed at relatively low levels in lung and kidney. Weakly expressed in brain and spleen. Expressed in astrocytes.

The protein localises to the endoplasmic reticulum membrane. It localises to the nucleus. Precursor of the transcription factor form (Processed cyclic AMP-responsive element-binding protein 3-like protein 1), which is embedded in the endoplasmic reticulum membrane with N-terminal DNA-binding and transcription activation domains oriented toward the cytosolic face of the membrane. In response to ER stress or DNA damage, transported to the Golgi, where it is cleaved in a site-specific manner by resident proteases S1P/MBTPS1 and S2P/MBTPS2. The released N-terminal cytosolic domain is translocated to the nucleus where it activates transcription of specific target genes involved in the cell-cycle progression inhibition. Functionally, transcription factor involved in cell type specific DNA damage and unfolded protein response (UPR). Binds the DNA consensus sequence 5'-GTGXGCXGC-3'. Plays a critical role in bone formation through the transcription of COL1A1, and possibly COL1A2, and the secretion of bone matrix proteins. Directly binds to the UPR element (UPRE)-like sequence in an osteoblast-specific COL1A1 promoter region and induces its transcription. Does not regulate COL1A1 in other tissues, such as skin. Required to protect astrocytes from ER stress-induced cell death. In astrocytes, binds to the cAMP response element (CRE) of the BiP/HSPA5 promoter and participate in its transcriptional activation. In astrocytes and osteoblasts, upon DNA damage, inhibits cell-cycle progression after G2/M phase by binding to promoters and activating transcription of genes encoding cell-cycle inhibitors, such as p21/CDKN1A. Required for TGFB1 to activate genes involved in the assembly of collagen extracellular matrix. The sequence is that of Cyclic AMP-responsive element-binding protein 3-like protein 1 (Creb3l1) from Mus musculus (Mouse).